Consider the following 402-residue polypeptide: MTYQQPDAKGFYGKFGGQFVPETLMTAVIELDKAYREAKEDSSFQAELDDLLKNYVGRETPLYHAKRLTDYIGGAQIYLKREDLNHTGAHKINNALGQVLLAKRMGKKKIIAETGAGQHGVATATAAALFDMDCTIYMGEEDVKRQALNVFRMELLGAKVFSVTDGSRVLKDAVNAALRAWVAGIEDTHYIMGSALGPAPFPEIVRDFQSVIGREAKRQYAEISGGKLPDAVMACIGGGSNAIGMFYPFVNDKSVAMYGAEASGLGLDTEKHAATFAKGRPGILHGALMDVLQDAHGQIMEAFSISAGLDYPGVGPEHCYFNEIGRATYDSITDEEALEGFKLLSCLEGIIPALESSHAIALAQKVAAKMSPDQSLIVCLSGRGDKDVMQVKERFEAEAEGK.

Lys91 is modified (N6-(pyridoxal phosphate)lysine).

It belongs to the TrpB family. As to quaternary structure, tetramer of two alpha and two beta chains. Requires pyridoxal 5'-phosphate as cofactor.

It carries out the reaction (1S,2R)-1-C-(indol-3-yl)glycerol 3-phosphate + L-serine = D-glyceraldehyde 3-phosphate + L-tryptophan + H2O. It functions in the pathway amino-acid biosynthesis; L-tryptophan biosynthesis; L-tryptophan from chorismate: step 5/5. In terms of biological role, the beta subunit is responsible for the synthesis of L-tryptophan from indole and L-serine. In Streptococcus thermophilus (strain CNRZ 1066), this protein is Tryptophan synthase beta chain.